Consider the following 423-residue polypeptide: G-protein coupled receptor 83 (423 aa).

The signal sequence occupies residues 1 to 16; sequence MVPHLLLLCLLPLVRA. The Extracellular portion of the chain corresponds to 18-71; that stretch reads EPHEGRADEQSAEAALAVPNASHFFSWNNYTFSDWQNFVGRRRYGAESQNPTVK. N37 and N46 each carry an N-linked (GlcNAc...) asparagine glycan. A helical transmembrane segment spans residues 72–92; it reads ALLIVAYSFIIVFSLFGNVLV. At 93-107 the chain is on the cytoplasmic side; that stretch reads CHVIFKNQRMHSATS. The chain crosses the membrane as a helical span at residues 108–129; that stretch reads LFIVNLAVADIMITLLNTPFTL. Topologically, residues 130 to 145 are extracellular; sequence VRFVNSTWIFGKGMCH. N-linked (GlcNAc...) asparagine glycosylation occurs at N134. C144 and C224 form a disulfide bridge. The helical transmembrane segment at 146-167 threads the bilayer; the sequence is VSRFAQYCSLHVSALTLTAIAV. Over 168-186 the chain is Cytoplasmic; it reads DRHQVIMHPLKPRISITKG. The chain crosses the membrane as a helical span at residues 187–208; the sequence is VIYIAVIWTMATFFSLPHAICQ. At 209–238 the chain is on the extracellular side; it reads KLFTFKYSEDIVRSLCLPDFPEPADLFWKY. Residues 239 to 260 traverse the membrane as a helical segment; that stretch reads LDLATFILLYILPLLIISVAYA. The Cytoplasmic segment spans residues 261–293; it reads RVAKKLWLCNMIGDVTTEQYFALRRKKKKTIKM. A helical transmembrane segment spans residues 294 to 315; it reads LMLVVVLFALCWFPLNCYVLLL. At 316 to 327 the chain is on the extracellular side; it reads SSKVIRTNNALY. The helical transmembrane segment at 328–348 threads the bilayer; sequence FAFHWFAMSSTCYNPFIYCWL. The Cytoplasmic portion of the chain corresponds to 349–423; the sequence is NENFRIELKA…SSVEPIVTMS (75 aa). Polar residues predominate over residues 402–414; it reads PTSQLQSGKTDLS. The interval 402 to 423 is disordered; it reads PTSQLQSGKTDLSSVEPIVTMS.

This sequence belongs to the G-protein coupled receptor 1 family. Highly expressed in the brain and spinal cord, and found in lower concentrations in the thymus and other tissues.

The protein resides in the cell membrane. Functionally, G-protein coupled receptor for PEN, a neuropeptide produced from the precursor protein, proSAAS (encoded by PCSK1N). Acts through a G(i)- and G(q)-alpha-alpha-mediated pathway in response to PEN. Plays a role in food intake and body weight regulation. May contribute to the regulation of anxiety-related behaviors. This is G-protein coupled receptor 83 from Homo sapiens (Human).